The following is a 437-amino-acid chain: MASLFSSVLLSLCLLSSLFLSNANAKPKLGFTADLIHRDSPKSPFYNPMETSSQRLRNAIHRSVNRVFHFTEKDNTPQPQIDLTSNSGEYLMNVSIGTPPFPIMAIADTGSDLLWTQCAPCDDCYTQVDPLFDPKTSSTYKDVSCSSSQCTALENQASCSTNDNTCSYSLSYGDNSYTKGNIAVDTLTLGSSDTRPMQLKNIIIGCGHNNAGTFNKKGSGIVGLGGGPVSLIKQLGDSIDGKFSYCLVPLTSKKDQTSKINFGTNAIVSGSGVVSTPLIAKASQETFYYLTLKSISVGSKQIQYSGSDSESSEGNIIIDSGTTLTLLPTEFYSELEDAVASSIDAEKKQDPQSGLSLCYSATGDLKVPVITMHFDGADVKLDSSNAFVQVSEDLVCFAFRGSPSFSIYGNVAQMNFLVGYDTVSKTVSFKPTDCAKM.

The N-terminal stretch at 1–25 (MASLFSSVLLSLCLLSSLFLSNANA) is a signal peptide. Positions 26 to 73 (KPKLGFTADLIHRDSPKSPFYNPMETSSQRLRNAIHRSVNRVFHFTEK) are cleaved as a propeptide — activation peptide. Residues 90-430 (YLMNVSIGTP…DTVSKTVSFK (341 aa)) enclose the Peptidase A1 domain. Asn-93 carries an N-linked (GlcNAc...) asparagine glycan. Residues Asp-108 and Asp-319 contribute to the active site.

It belongs to the peptidase A1 family.

The protein localises to the secreted. The protein resides in the extracellular space. Its subcellular location is the apoplast. Functionally, involved in salicylic acid-dependent inducible resistance responses. May release an endogenous peptide elicitor required for the activation of inducible resistance mechanisms. Possesses protease activity in vitro. The chain is Aspartic proteinase CDR1 (CDR1) from Arabidopsis thaliana (Mouse-ear cress).